The following is a 374-amino-acid chain: DNA replication and repair protein RecF (374 aa).

34–41 (GDNGAGKT) contacts ATP.

This sequence belongs to the RecF family.

Its subcellular location is the cytoplasm. The RecF protein is involved in DNA metabolism; it is required for DNA replication and normal SOS inducibility. RecF binds preferentially to single-stranded, linear DNA. It also seems to bind ATP. The sequence is that of DNA replication and repair protein RecF from Rhizobium johnstonii (strain DSM 114642 / LMG 32736 / 3841) (Rhizobium leguminosarum bv. viciae).